The following is a 244-amino-acid chain: 7-cyano-7-deazaguanine synthase (244 aa).

14-24 lines the ATP pocket; the sequence is FSGGQDSATCV. Positions 202, 217, 220, and 223 each coordinate Zn(2+).

This sequence belongs to the QueC family. Requires Zn(2+) as cofactor.

The enzyme catalyses 7-carboxy-7-deazaguanine + NH4(+) + ATP = 7-cyano-7-deazaguanine + ADP + phosphate + H2O + H(+). It functions in the pathway purine metabolism; 7-cyano-7-deazaguanine biosynthesis. Catalyzes the ATP-dependent conversion of 7-carboxy-7-deazaguanine (CDG) to 7-cyano-7-deazaguanine (preQ(0)). This chain is 7-cyano-7-deazaguanine synthase, found in Burkholderia multivorans (strain ATCC 17616 / 249).